The sequence spans 355 residues: UDP-3-O-acylglucosamine N-acyltransferase (355 aa).

His248 serves as the catalytic Proton acceptor.

Belongs to the transferase hexapeptide repeat family. LpxD subfamily. As to quaternary structure, homotrimer.

It catalyses the reaction a UDP-3-O-[(3R)-3-hydroxyacyl]-alpha-D-glucosamine + a (3R)-hydroxyacyl-[ACP] = a UDP-2-N,3-O-bis[(3R)-3-hydroxyacyl]-alpha-D-glucosamine + holo-[ACP] + H(+). It functions in the pathway bacterial outer membrane biogenesis; LPS lipid A biosynthesis. Its function is as follows. Catalyzes the N-acylation of UDP-3-O-acylglucosamine using 3-hydroxyacyl-ACP as the acyl donor. Is involved in the biosynthesis of lipid A, a phosphorylated glycolipid that anchors the lipopolysaccharide to the outer membrane of the cell. The chain is UDP-3-O-acylglucosamine N-acyltransferase from Syntrophobacter fumaroxidans (strain DSM 10017 / MPOB).